We begin with the raw amino-acid sequence, 1374 residues long: DNA-directed RNA polymerase subunit beta' (1374 aa).

The interval 1-47 is disordered; sequence MTSTSPKSRKPSTKTTKSKSKSKSKSKAAKAAAASASPALARTPPQF. Residues 7–28 are compositionally biased toward basic residues; it reads KSRKPSTKTTKSKSKSKSKSKA. The span at 29 to 45 shows a compositional bias: low complexity; that stretch reads AKAAAASASPALARTPP. Zn(2+)-binding residues include C258, C325, C332, and C335. The interval 1343 to 1374 is disordered; sequence VRPTGENELEEEQLPDPSALEGLQQEGLLTEE. A compositionally biased stretch (low complexity) spans 1362-1374; the sequence is LEGLQQEGLLTEE.

This sequence belongs to the RNA polymerase beta' chain family. RpoC2 subfamily. In terms of assembly, in cyanobacteria the RNAP catalytic core is composed of 2 alpha, 1 beta, 1 beta', 1 gamma and 1 omega subunit. When a sigma factor is associated with the core the holoenzyme is formed, which can initiate transcription. Zn(2+) is required as a cofactor.

The catalysed reaction is RNA(n) + a ribonucleoside 5'-triphosphate = RNA(n+1) + diphosphate. Functionally, DNA-dependent RNA polymerase catalyzes the transcription of DNA into RNA using the four ribonucleoside triphosphates as substrates. This is DNA-directed RNA polymerase subunit beta' from Prochlorococcus marinus (strain MIT 9303).